The chain runs to 137 residues: Phospholipase A2 group V (137 aa).

A signal peptide spans 1–20 (MKRLLTLAWFLACSVPAVPG). 6 cysteine pairs are disulfide-bonded: Cys-46/Cys-137, Cys-48/Cys-64, Cys-63/Cys-117, Cys-70/Cys-110, Cys-79/Cys-103, and Cys-97/Cys-108. Residues Tyr-47, Gly-49, and Gly-51 each coordinate Ca(2+). His-67 is a catalytic residue. Residue Asp-68 coordinates Ca(2+). Asp-111 is a catalytic residue.

Belongs to the phospholipase A2 family. Requires Ca(2+) as cofactor. Post-translationally, this enzyme lacks one of the seven disulfide bonds found in similar PA2 proteins.

The protein localises to the secreted. The protein resides in the cell membrane. Its subcellular location is the cytoplasmic vesicle. It localises to the phagosome. It is found in the recycling endosome. The protein localises to the golgi apparatus. The protein resides in the cis-Golgi network. Its subcellular location is the trans-Golgi network. The enzyme catalyses a 1,2-diacyl-sn-glycero-3-phosphocholine + H2O = a 1-acyl-sn-glycero-3-phosphocholine + a fatty acid + H(+). It catalyses the reaction 1-hexadecanoyl-2-(9Z-octadecenoyl)-sn-glycero-3-phosphocholine + H2O = 1-hexadecanoyl-sn-glycero-3-phosphocholine + (9Z)-octadecenoate + H(+). It carries out the reaction 1-hexadecanoyl-2-(5Z,8Z,11Z,14Z-eicosatetraenoyl)-sn-glycero-3-phosphocholine + H2O = 1-hexadecanoyl-sn-glycero-3-phosphocholine + (5Z,8Z,11Z,14Z)-eicosatetraenoate + H(+). The catalysed reaction is 1-hexadecanoyl-2-(9Z,12Z-octadecadienoyl)-sn-glycero-3-phosphoethanolamine + H2O = 1-hexadecanoyl-sn-glycero-3-phosphoethanolamine + (9Z,12Z)-octadecadienoate + H(+). The enzyme catalyses 1-hexadecanoyl-2-(5Z,8Z,11Z,14Z-eicosatetraenoyl)-sn-glycero-3-phosphoethanolamine + H2O = 1-hexadecanoyl-sn-glycero-3-phosphoethanolamine + (5Z,8Z,11Z,14Z)-eicosatetraenoate + H(+). It catalyses the reaction 1-octadecanoyl-2-(5Z,8Z,11Z,14Z-eicosatetraenoyl)-sn-glycero-3-phospho-(1D-myo-inositol) + H2O = 1-octadecanoyl-sn-glycero-3-phospho-(1D-myo-inositol) + (5Z,8Z,11Z,14Z)-eicosatetraenoate + H(+). It carries out the reaction 1-hexadecanoyl-2-(9Z-octadecenoyl)-sn-glycero-3-phosphoglycerol + H2O = 1-hexadecanoyl-sn-glycero-3-phosphoglycerol + (9Z)-octadecenoate + H(+). The catalysed reaction is N-hexadecanoyl-1,2-di-(9Z-octadecenoyl)-sn-glycero-3-phosphoethanolamine + H2O = N-hexadecanoyl-1-(9Z-octadecenoyl)-sn-glycero-3-phosphoethanolamine + (9Z)-octadecenoate + H(+). The enzyme catalyses 1'-[1,2-di-(9Z-octadecenoyl)-sn-glycero-3-phospho]-3'-[1-(9Z-octadecenoyl)-sn-glycero-3-phospho]-glycerol + H2O = 1',3'-bis-[1-(9Z-octadecenoyl)-sn-glycero-3-phospho]-glycerol + (9Z)-octadecenoate + H(+). It catalyses the reaction 1',3'-bis[1,2-di-(9Z-octadecenoyl)-sn-glycero-3-phospho]-glycerol + H2O = 1'-[1,2-di-(9Z-octadecenoyl)-sn-glycero-3-phospho]-3'-[1-(9Z-octadecenoyl)-sn-glycero-3-phospho]-glycerol + (9Z)-octadecenoate + H(+). The protein operates within lipid metabolism; phospholipid metabolism. It participates in lipid metabolism; leukotriene B4 biosynthesis. Its pathway is lipid metabolism; leukotriene C4 biosynthesis. Functionally, secretory calcium-dependent phospholipase A2 that primarily targets extracellular phospholipids. Hydrolyzes the ester bond of the fatty acyl group attached at sn-2 position of phospholipids (phospholipase A2 activity), preferentially releasing fatty acyl groups with a low degree of unsaturation such as oleoyl (C18:1) and linoleoyl (C18:2) groups. Hydrolyzes low-density lipoprotein (LDL) phospholipids releasing unsaturated fatty acids that drive macrophage polarization toward an M2 phenotype. May act in an autocrine and paracrine manner. Contributes to lipid remodeling of cellular membranes at different subcellular locations and generation of lipid mediators involved in pathogen clearance. Cleaves sn-2 fatty acyl chains of cardiolipin, a major component of the inner membrane of mitochondria and bacterial membranes. Promotes phagocytosis of bacteria in macrophages through production of lysophosphatidylethanolamines. Displays bactericidal activity against Gram-positive bacteria by directly hydrolyzing phospholipids of the bacterial membrane. Promotes phagocytosis and killing of ingested fungi likely through controlling phagosome-lysosome fusion and phagosome maturation. Plays a role in biosynthesis of cysteinyl leukotrienes (CysLTs) in myeloid cells. In eosinophils, triggers perinuclear arachidonate release and LTC4 synthesis in a PLA2G4A-independent way. In neutrophils, amplifies CysLTs biosynthesis initiated by PLA2G4A. Promotes immune complex clearance in macrophages via stimulating synthesis of CysLTs, which act through CYSLTR1 to trigger phagocytosis. May regulate antigen processing in antigen-presenting cells. In pulmonary macrophages regulates IL33 production required for activation of group 2 innate lymphoid cells. May play a role in the biosynthesis of N-acyl ethanolamines that regulate energy metabolism. Hydrolyzes N-acyl phosphatidylethanolamines to N-acyl lysophosphatidylethanolamines, which are further cleaved by a lysophospholipase D to release N-acyl ethanolamines. This is Phospholipase A2 group V (Pla2g5) from Rattus norvegicus (Rat).